The chain runs to 427 residues: Serine--tRNA ligase (427 aa).

229 to 231 (TAE) contributes to the L-serine binding site. Position 260 to 262 (260 to 262 (RSE)) interacts with ATP. An L-serine-binding site is contributed by Glu283. 347–350 (EISS) is a binding site for ATP. Ser383 contributes to the L-serine binding site.

Belongs to the class-II aminoacyl-tRNA synthetase family. Type-1 seryl-tRNA synthetase subfamily. As to quaternary structure, homodimer. The tRNA molecule binds across the dimer.

The protein localises to the cytoplasm. It carries out the reaction tRNA(Ser) + L-serine + ATP = L-seryl-tRNA(Ser) + AMP + diphosphate + H(+). The enzyme catalyses tRNA(Sec) + L-serine + ATP = L-seryl-tRNA(Sec) + AMP + diphosphate + H(+). It functions in the pathway aminoacyl-tRNA biosynthesis; selenocysteinyl-tRNA(Sec) biosynthesis; L-seryl-tRNA(Sec) from L-serine and tRNA(Sec): step 1/1. Functionally, catalyzes the attachment of serine to tRNA(Ser). Is also able to aminoacylate tRNA(Sec) with serine, to form the misacylated tRNA L-seryl-tRNA(Sec), which will be further converted into selenocysteinyl-tRNA(Sec). The chain is Serine--tRNA ligase from Nitrosococcus oceani (strain ATCC 19707 / BCRC 17464 / JCM 30415 / NCIMB 11848 / C-107).